The primary structure comprises 229 residues: Cytidylate kinase (229 aa).

Residue 10-18 (GHSSSGKST) participates in ATP binding.

The protein belongs to the cytidylate kinase family. Type 1 subfamily.

It is found in the cytoplasm. It catalyses the reaction CMP + ATP = CDP + ADP. The catalysed reaction is dCMP + ATP = dCDP + ADP. This chain is Cytidylate kinase, found in Parabacteroides distasonis (strain ATCC 8503 / DSM 20701 / CIP 104284 / JCM 5825 / NCTC 11152).